A 345-amino-acid polypeptide reads, in one-letter code: Phosphate acyltransferase (345 aa).

This sequence belongs to the PlsX family. In terms of assembly, homodimer. Probably interacts with PlsY.

The protein localises to the cytoplasm. It carries out the reaction a fatty acyl-[ACP] + phosphate = an acyl phosphate + holo-[ACP]. The protein operates within lipid metabolism; phospholipid metabolism. Functionally, catalyzes the reversible formation of acyl-phosphate (acyl-PO(4)) from acyl-[acyl-carrier-protein] (acyl-ACP). This enzyme utilizes acyl-ACP as fatty acyl donor, but not acyl-CoA. The sequence is that of Phosphate acyltransferase from Wolbachia pipientis subsp. Culex pipiens (strain wPip).